A 383-amino-acid chain; its full sequence is Probable tRNA sulfurtransferase (383 aa).

The 101-residue stretch at 58-158 (NEIIHILKMI…ENKSYVWFDK (101 aa)) folds into the THUMP domain. Residues 176–177 (LL), 201–202 (TF), Arg259, Gly281, and Gln290 each bind ATP.

Belongs to the ThiI family.

The protein localises to the cytoplasm. The catalysed reaction is [ThiI sulfur-carrier protein]-S-sulfanyl-L-cysteine + a uridine in tRNA + 2 reduced [2Fe-2S]-[ferredoxin] + ATP + H(+) = [ThiI sulfur-carrier protein]-L-cysteine + a 4-thiouridine in tRNA + 2 oxidized [2Fe-2S]-[ferredoxin] + AMP + diphosphate. It carries out the reaction [ThiS sulfur-carrier protein]-C-terminal Gly-Gly-AMP + S-sulfanyl-L-cysteinyl-[cysteine desulfurase] + AH2 = [ThiS sulfur-carrier protein]-C-terminal-Gly-aminoethanethioate + L-cysteinyl-[cysteine desulfurase] + A + AMP + 2 H(+). It participates in cofactor biosynthesis; thiamine diphosphate biosynthesis. Functionally, catalyzes the ATP-dependent transfer of a sulfur to tRNA to produce 4-thiouridine in position 8 of tRNAs, which functions as a near-UV photosensor. Also catalyzes the transfer of sulfur to the sulfur carrier protein ThiS, forming ThiS-thiocarboxylate. This is a step in the synthesis of thiazole, in the thiamine biosynthesis pathway. The sulfur is donated as persulfide by IscS. The polypeptide is Probable tRNA sulfurtransferase (Malacoplasma penetrans (strain HF-2) (Mycoplasma penetrans)).